A 636-amino-acid polypeptide reads, in one-letter code: MYSLLETINSPADLRRLPRAQLKALADELRAYVIDSVSQTGGHLSSNLGTVELTVALHYVFNTPDDRLVWDVGHQTYPHKILTGRRERMGTLRQLGGLSGFPRRDESEYDTFGTAHSSTSISAALGMALAAEFKGENRNAVAVIGDGSMSAGMAFEALNNAGVHDHCKLLVVLNDNDMSISPPVGALNRHLAQLMSGRFYASARHVGKKVLQVAPPLLELARRLESHAKGMVVPAAVFESFGFNYIGPIDGHDLESLIPTLENIRHLMATGAGPQFLHVVTKKGQGYKLAEADPIAYHGPGKFDPSMGLQKSSAPAKQTFTQVFGRWLCDMAEHDPRLVGITPAMREGSGMVEFHKRFPKRYHDVGIAEQHAVTFAAGMACEGLKPVLAIYSTFLQRGYDQLIHDVALQNLPVVFALDRAGLVGADGATHAGAYDIPYLRCIPNMGIACPADENECRKLLTTAFEQDSPVAVRYPRGAGAGVEPEAGLKSLPFGKGEIRREGSGIAILAFGTLLYPALQAAEKLGATVVNMRWAKPLDTELLLKVAAGHEVLVTLEEGAIMGGAGSAVGEALQAAGVVKPLLQLGLKDEFIEHGEVAVLLALQGLDAAGIEAAVRSRFGSFKSTDPLAKVMLKSVA.

Residues H74 and 115–117 (AHS) contribute to the thiamine diphosphate site. D146 lines the Mg(2+) pocket. Residues 147–148 (GS), N176, Y287, and E369 contribute to the thiamine diphosphate site. N176 serves as a coordination point for Mg(2+).

It belongs to the transketolase family. DXPS subfamily. As to quaternary structure, homodimer. The cofactor is Mg(2+). It depends on thiamine diphosphate as a cofactor.

It catalyses the reaction D-glyceraldehyde 3-phosphate + pyruvate + H(+) = 1-deoxy-D-xylulose 5-phosphate + CO2. It participates in metabolic intermediate biosynthesis; 1-deoxy-D-xylulose 5-phosphate biosynthesis; 1-deoxy-D-xylulose 5-phosphate from D-glyceraldehyde 3-phosphate and pyruvate: step 1/1. In terms of biological role, catalyzes the acyloin condensation reaction between C atoms 2 and 3 of pyruvate and glyceraldehyde 3-phosphate to yield 1-deoxy-D-xylulose-5-phosphate (DXP). The sequence is that of 1-deoxy-D-xylulose-5-phosphate synthase from Polaromonas naphthalenivorans (strain CJ2).